A 494-amino-acid chain; its full sequence is Glutamyl-tRNA(Gln) amidotransferase subunit A (494 aa).

Catalysis depends on charge relay system residues Lys88 and Ser163. The active-site Acyl-ester intermediate is the Ser187.

It belongs to the amidase family. GatA subfamily. As to quaternary structure, heterotrimer of A, B and C subunits.

It carries out the reaction L-glutamyl-tRNA(Gln) + L-glutamine + ATP + H2O = L-glutaminyl-tRNA(Gln) + L-glutamate + ADP + phosphate + H(+). Functionally, allows the formation of correctly charged Gln-tRNA(Gln) through the transamidation of misacylated Glu-tRNA(Gln) in organisms which lack glutaminyl-tRNA synthetase. The reaction takes place in the presence of glutamine and ATP through an activated gamma-phospho-Glu-tRNA(Gln). The chain is Glutamyl-tRNA(Gln) amidotransferase subunit A from Corynebacterium diphtheriae (strain ATCC 700971 / NCTC 13129 / Biotype gravis).